Consider the following 375-residue polypeptide: Nicotinate-nucleotide--dimethylbenzimidazole phosphoribosyltransferase (375 aa).

The active-site Proton acceptor is the E323. A disordered region spans residues 344 to 375 (LPEKPEELEAGEGPEAAEESSPEPENPEALAE). A compositionally biased stretch (acidic residues) spans 351–375 (LEAGEGPEAAEESSPEPENPEALAE).

Belongs to the CobT family.

The catalysed reaction is 5,6-dimethylbenzimidazole + nicotinate beta-D-ribonucleotide = alpha-ribazole 5'-phosphate + nicotinate + H(+). The protein operates within nucleoside biosynthesis; alpha-ribazole biosynthesis; alpha-ribazole from 5,6-dimethylbenzimidazole: step 1/2. Catalyzes the synthesis of alpha-ribazole-5'-phosphate from nicotinate mononucleotide (NAMN) and 5,6-dimethylbenzimidazole (DMB). The chain is Nicotinate-nucleotide--dimethylbenzimidazole phosphoribosyltransferase from Streptomyces avermitilis (strain ATCC 31267 / DSM 46492 / JCM 5070 / NBRC 14893 / NCIMB 12804 / NRRL 8165 / MA-4680).